We begin with the raw amino-acid sequence, 134 residues long: Transcriptional activator protein (134 aa).

The Nuclear localization signal signature appears at 17–31 (KVQHRIAKKTTRRRR). A zinc finger spans residues 36–53 (CGCSYFVALGCHNHGFTH). The segment at 73–103 (KSPVFQDNQTPRETISEEPRHNHNTSPIQLQ) is disordered. Polar residues predominate over residues 75-85 (PVFQDNQTPRE). The tract at residues 119–134 (NLDSFTSSDLAFLKSI) is transactivation.

This sequence belongs to the geminiviridae transcriptional activator protein family. Monomer. Homodimer. Homooligomer. Self-interaction correlates with nuclear localization and efficient activation of transcription. Monomers suppress local silencing by interacting with and inactivating host adenosine kinase 2 (ADK2) in the cytoplasm. Interacts with and inhibits host SNF1 kinase. Binds to ssDNA. May interact with host RPS27A. Phosphorylated.

It localises to the host nucleus. The protein localises to the host cytoplasm. In terms of biological role, multifunctional protein that modulates host antiviral defenses and promotes host attractiveness to insect vectors. Acts as a suppressor of RNA-mediated gene silencing, also known as post-transcriptional gene silencing (PTGS), a mechanism of plant viral defense that limits the accumulation of viral RNAs. TrAP suppresses the host RNA silencing by inhibiting adenosine kinase 2 (ADK2), a kinase involved in a general methylation pathway. Also suppresses the host basal defense by interacting with and inhibiting SNF1 kinase, a key regulator of cell metabolism implicated in innate antiviral defense. Functionally, inhibits signal transduction by the phytohormone jasmonate, making the infected plant more attractive to aphids, which are the second host to play a role as a dissemination vector. Acts by binding to ubiquitin precursor RPS27A, thereby preventing ubiquitin degradation of JAZ. The protein is Transcriptional activator protein of Tomato yellow leaf curl China virus (TYLCCNV).